Here is a 619-residue protein sequence, read N- to C-terminus: Sodium-coupled monocarboxylate transporter 2 (619 aa).

Over 1 to 9 the chain is Extracellular; that stretch reads MRVKNFEAW. A helical transmembrane segment spans residues 10-30; the sequence is DYVVFAGLFVISSGIGVFFAI. The Cytoplasmic portion of the chain corresponds to 31–47; the sequence is KERKKTTSREFLVGGRQ. A helical transmembrane segment spans residues 48–68; the sequence is MSFGPVALSLTASFMSAVTVL. Over 69-80 the chain is Extracellular; the sequence is GTPAEVYRFGAS. The helical transmembrane segment at 81–101 threads the bilayer; it reads FFLFLISYVFVVFFTSELFLP. The Cytoplasmic segment spans residues 102–128; it reads VFYRSGITSTYEYLQLRFNKPVRYAAT. Residues 129–149 traverse the membrane as a helical segment; it reads IIYIVQTILYTGVVVYAPALA. Over 150 to 157 the chain is Extracellular; that stretch reads LNQVTGFN. A helical membrane pass occupies residues 158-178; the sequence is LWASVFATGIVCTFYCSLGGL. At 179–180 the chain is on the cytoplasmic side; the sequence is KA. Residues 181–201 traverse the membrane as a helical segment; that stretch reads VVWTDAFQMVVMIVGFLTVLI. Residues 202–235 lie on the Extracellular side of the membrane; that stretch reads QGSNHVGGFNNVLEKAGNGSRLHIVDFDVDPLRR. N-linked (GlcNAc...) asparagine glycosylation occurs at Asn219. A helical membrane pass occupies residues 236 to 256; it reads HTFWTITIGGTFTWLGVYGVN. Over 257–275 the chain is Cytoplasmic; sequence QSTIQRCISCKTEKHAKLA. The chain crosses the membrane as a helical span at residues 276 to 296; it reads LYFNLLGLWIIVACAVFSGLI. Topologically, residues 297 to 321 are extracellular; sequence MYSHFKDCDPWTSGVISAPDQLMPY. The helical transmembrane segment at 322–342 threads the bilayer; sequence FVMEIFATMPGLPGLFVACAF. The Cytoplasmic portion of the chain corresponds to 343–385; that stretch reads SGTLSTVAASINALATVTFEDFVKSCFPHLSDKLSTWISKGLC. Residues 386–406 form a helical membrane-spanning segment; it reads ILFGIMCTSMAVVASLMGSVV. Residues 407 to 411 are Extracellular-facing; the sequence is QAALS. A helical transmembrane segment spans residues 412-432; it reads IHGMCGGPMLGLFTLGLVFPF. Residues 433–437 lie on the Cytoplasmic side of the membrane; it reads VNWKG. The chain crosses the membrane as a helical span at residues 438-458; it reads ALGGLLTGITLSFWVAIGSFI. The Extracellular portion of the chain corresponds to 459 to 504; that stretch reads YPAPESKTLPLPLSTEHCVELNITTTVAPQISSRPVLADTWYSLSY. Residue Asn480 is glycosylated (N-linked (GlcNAc...) asparagine). Residues 505 to 525 traverse the membrane as a helical segment; sequence LYFSAVGCLGCIAAGIIISFL. The Cytoplasmic portion of the chain corresponds to 526-619; it reads TGKQRGKDID…NSVPEKTTYF (94 aa).

It belongs to the sodium:solute symporter (SSF) (TC 2.A.21) family. As to expression, expressed in the cortical region of the kidney corresponding to the proximal tubule. Expressed in Mueller cells of the inner retina (at protein level). Isoform 1 is expressed in the retina, kidney, small intestine and skeletal muscle. Isoform 2 is not detected in the kidney, small intestine and skeletal muscle. In the kidney, expressed predominantly in tubular epithelial cells of the cortical region and in the convoluted portions of the proximal tubule (pars convoluta). In the small intestine, its expression is highest in the proximal part and gradually decreased towards the distal end. Expressed in the neural retina. Not detected in the caecum and colon.

The protein localises to the apical cell membrane. It catalyses the reaction (S)-lactate(out) + Na(+)(out) = (S)-lactate(in) + Na(+)(in). The enzyme catalyses nicotinate(out) + Na(+)(out) = nicotinate(in) + Na(+)(in). The catalysed reaction is pyruvate(out) + Na(+)(out) = pyruvate(in) + Na(+)(in). It carries out the reaction propanoate(out) + Na(+)(out) = propanoate(in) + Na(+)(in). It catalyses the reaction butanoate(out) + Na(+)(out) = butanoate(in) + Na(+)(in). The enzyme catalyses acetoacetate(out) + Na(+)(out) = acetoacetate(in) + Na(+)(in). Functionally, acts as an electroneutral and low-affinity sodium (Na(+))-dependent sodium-coupled solute transporter. Catalyzes the transport across the plasma membrane of many monocarboxylates such as lactate, pyruvate, nicotinate, propionate, butyrate and beta-D-hydroxybutyrate. May be responsible for the first step of reabsorption of monocarboxylates from the lumen of the proximal tubule of the kidney and the small intestine. May play also a role in monocarboxylates transport in the retina. Mediates electroneutral uptake of lactate, with a stoichiometry of 2 Na(+) for each lactate. The chain is Sodium-coupled monocarboxylate transporter 2 (Slc5a12) from Mus musculus (Mouse).